We begin with the raw amino-acid sequence, 228 residues long: Mediator of RNA polymerase II transcription subunit 7-B (228 aa).

This sequence belongs to the Mediator complex subunit 7 family. Component of the Mediator complex.

It localises to the nucleus. Component of the Mediator complex, a coactivator involved in the regulated transcription of nearly all RNA polymerase II-dependent genes. Mediator functions as a bridge to convey information from gene-specific regulatory proteins to the basal RNA polymerase II transcription machinery. Mediator is recruited to promoters by direct interactions with regulatory proteins and serves as a scaffold for the assembly of a functional preinitiation complex with RNA polymerase II and the general transcription factors. In Xenopus laevis (African clawed frog), this protein is Mediator of RNA polymerase II transcription subunit 7-B (med7-b).